Consider the following 415-residue polypeptide: Adenosylhomocysteinase (415 aa).

The substrate site is built by T53, D124, and E147. 148–150 (TTT) serves as a coordination point for NAD(+). Residues K177 and D181 each contribute to the substrate site. NAD(+) is bound by residues N182, 211–216 (GYGWVG), E234, N269, 290–292 (SGH), and N337.

This sequence belongs to the adenosylhomocysteinase family. NAD(+) is required as a cofactor.

The protein localises to the cytoplasm. It catalyses the reaction S-adenosyl-L-homocysteine + H2O = L-homocysteine + adenosine. The protein operates within amino-acid biosynthesis; L-homocysteine biosynthesis; L-homocysteine from S-adenosyl-L-homocysteine: step 1/1. Its function is as follows. May play a key role in the regulation of the intracellular concentration of adenosylhomocysteine. The chain is Adenosylhomocysteinase from Sulfolobus acidocaldarius (strain ATCC 33909 / DSM 639 / JCM 8929 / NBRC 15157 / NCIMB 11770).